A 406-amino-acid chain; its full sequence is MNQPLKPNSFRAGPDEDGRFGIFGGRFVAETLMPLILDLQDEWNKAKNDPVFKAELEKLGAHYIGRPSPLYFAERLTAELGGAKIYFKREELNHTGSHKINNCIGQILLAKRMGKTRIIAETGAGQHGVASATVAARFGLPCVVYMGATDVERQAPNVFRMKLLGAEVKPVTAGHGTLKDAMNEALRDWVTNVDSTYYLIGTAAGPHPYPEMVRDFQAVIGQEAKEQLLAAEGRLPDLVVAAVGGGSNAIGIFHPFLDDDGVRIVGVEAGGKGLDGDEHCASITAGSPGVLHGNRTYLLQDGDGQIKEGHSISAGLDYPGIGPEHAWLNDIGRVEYVPIMDHEALEAFQTLTRLEGIIPALEPSHALAEVIKRAPKMGKDEIILMNLSGRGDKDIFTVGKILGMGQ.

Lysine 99 is subject to N6-(pyridoxal phosphate)lysine.

Belongs to the TrpB family. Tetramer of two alpha and two beta chains. Requires pyridoxal 5'-phosphate as cofactor.

It catalyses the reaction (1S,2R)-1-C-(indol-3-yl)glycerol 3-phosphate + L-serine = D-glyceraldehyde 3-phosphate + L-tryptophan + H2O. It functions in the pathway amino-acid biosynthesis; L-tryptophan biosynthesis; L-tryptophan from chorismate: step 5/5. In terms of biological role, the beta subunit is responsible for the synthesis of L-tryptophan from indole and L-serine. The chain is Tryptophan synthase beta chain from Sinorhizobium fredii (strain NBRC 101917 / NGR234).